Reading from the N-terminus, the 358-residue chain is Photosystem II protein D1 (358 aa).

Transmembrane regions (helical) follow at residues 29–46 (YVGW…AATI), 116–131 (HFLI…QWEL), and 140–154 (WICV…AATS). Residue histidine 116 coordinates chlorophyll a. Residue tryptophan 124 coordinates pheophytin a. The [CaMn4O5] cluster site is built by aspartate 168 and glutamate 187. The helical transmembrane segment at 195–216 (FHQLGVAGVFGGSLFCAMHGSL) threads the bilayer. Histidine 196 contributes to the chlorophyll a binding site. A quinone contacts are provided by residues histidine 213 and 262-263 (SF). Residue histidine 213 coordinates Fe cation. Histidine 270 is a Fe cation binding site. A helical membrane pass occupies residues 272–286 (FLAAWPVVCIWFTAL). [CaMn4O5] cluster-binding residues include histidine 330, glutamate 331, aspartate 340, and alanine 342. The propeptide occupies 343-358 (AGEVLPIALQSPAING).

This sequence belongs to the reaction center PufL/M/PsbA/D family. In terms of assembly, PSII is composed of 1 copy each of membrane proteins PsbA, PsbB, PsbC, PsbD, PsbE, PsbF, PsbH, PsbI, PsbJ, PsbK, PsbL, PsbM, PsbT, PsbX, PsbY, PsbZ, Psb30/Ycf12, peripheral proteins PsbO, CyanoQ (PsbQ), PsbU, PsbV and a large number of cofactors. It forms dimeric complexes. The cofactor is The D1/D2 heterodimer binds P680, chlorophylls that are the primary electron donor of PSII, and subsequent electron acceptors. It shares a non-heme iron and each subunit binds pheophytin, quinone, additional chlorophylls, carotenoids and lipids. D1 provides most of the ligands for the Mn4-Ca-O5 cluster of the oxygen-evolving complex (OEC). There is also a Cl(-1) ion associated with D1 and D2, which is required for oxygen evolution. The PSII complex binds additional chlorophylls, carotenoids and specific lipids.. In terms of processing, tyr-159 forms a radical intermediate that is referred to as redox-active TyrZ, YZ or Y-Z. C-terminally processed by CtpA; processing is essential to allow assembly of the oxygen-evolving complex and thus photosynthetic growth.

The protein resides in the cellular thylakoid membrane. It catalyses the reaction 2 a plastoquinone + 4 hnu + 2 H2O = 2 a plastoquinol + O2. Functionally, photosystem II (PSII) is a light-driven water:plastoquinone oxidoreductase that uses light energy to abstract electrons from H(2)O, generating O(2) and a proton gradient subsequently used for ATP formation. It consists of a core antenna complex that captures photons, and an electron transfer chain that converts photonic excitation into a charge separation. The D1/D2 (PsbA/PsbD) reaction center heterodimer binds P680, the primary electron donor of PSII as well as several subsequent electron acceptors. The sequence is that of Photosystem II protein D1 from Mastigocladus laminosus (Fischerella sp.).